A 447-amino-acid polypeptide reads, in one-letter code: Omega-3 fatty acid desaturase, chloroplastic (447 aa).

The Histidine box-1 signature appears at 167–171; it reads HDCGH. The Histidine box-2 motif lies at 203–207; it reads HRTHH. The short motif at 370–374 is the Histidine box-3 element; that stretch reads HVIHH.

The protein belongs to the fatty acid desaturase type 1 family.

Its subcellular location is the plastid. The protein resides in the chloroplast membrane. It functions in the pathway lipid metabolism; polyunsaturated fatty acid biosynthesis. Chloroplast omega-3 fatty acid desaturase introduces the third double bond in the biosynthesis of 16:3 and 18:3 fatty acids, important constituents of plant membranes. It is thought to use ferredoxin as an electron donor and to act on fatty acids esterified to galactolipids, sulfolipids and phosphatidylglycerol. The polypeptide is Omega-3 fatty acid desaturase, chloroplastic (FAD7) (Sesamum indicum (Oriental sesame)).